The chain runs to 129 residues: Antileukoproteinase (129 aa).

A signal peptide spans 1–22 (GRGLLPFVLLALGIXAPWAVEG). 2 WAP domains span residues 25–73 (NALK…LNPV) and 79–127 (VKVK…LTPV). 8 cysteine pairs are disulfide-bonded: C32/C61, C40/C65, C48/C60, C54/C69, C86/C115, C93/C119, C102/C114, and C108/C123. The segment at 81–129 (VKPGKCPVVYGQCMMLNPPNHCKTDSQCLGDLKCCKSMCGKVCLTPVKA) is elastase inhibitory domain.

In terms of assembly, interacts with GRN; interaction protects progranulin from proteolysis. Found in pregnant endometrium and myometrium, placenta, allantoic fluids, fetal cord blood, and fetal liver. Also found in uterus and lung.

It is found in the secreted. In terms of biological role, acid-stable proteinase inhibitor with strong affinities for trypsin, chymotrypsin, elastase, and cathepsin G. Modulates the inflammatory and immune responses after bacterial infection, and after infection by the intracellular parasite L.major. Down-regulates responses to bacterial lipopolysaccharide (LPS). Plays a role in regulating the activation of NF-kappa-B and inflammatory responses. Has antimicrobial activity against mycobacteria, but not against salmonella. Contributes to normal resistance against infection by M.tuberculosis. Required for normal resistance to infection by L.major. Required for normal wound healing, probably by preventing tissue damage by limiting protease activity. Together with ELANE, required for normal differentiation and proliferation of bone marrow myeloid cells. The sequence is that of Antileukoproteinase (SLPI) from Sus scrofa (Pig).